A 113-amino-acid polypeptide reads, in one-letter code: Nucleoid-associated protein sync_0026 (113 aa).

It belongs to the YbaB/EbfC family. Homodimer.

The protein resides in the cytoplasm. It is found in the nucleoid. Binds to DNA and alters its conformation. May be involved in regulation of gene expression, nucleoid organization and DNA protection. This Synechococcus sp. (strain CC9311) protein is Nucleoid-associated protein sync_0026.